Reading from the N-terminus, the 599-residue chain is Elongation factor 4 (599 aa).

The region spanning 2–184 (KNIRNFSIIA…RLVRDIPPPE (183 aa)) is the tr-type G domain. GTP is bound by residues 14 to 19 (DHGKST) and 131 to 134 (NKID).

The protein belongs to the TRAFAC class translation factor GTPase superfamily. Classic translation factor GTPase family. LepA subfamily.

The protein localises to the cell inner membrane. It catalyses the reaction GTP + H2O = GDP + phosphate + H(+). In terms of biological role, required for accurate and efficient protein synthesis under certain stress conditions. May act as a fidelity factor of the translation reaction, by catalyzing a one-codon backward translocation of tRNAs on improperly translocated ribosomes. Back-translocation proceeds from a post-translocation (POST) complex to a pre-translocation (PRE) complex, thus giving elongation factor G a second chance to translocate the tRNAs correctly. Binds to ribosomes in a GTP-dependent manner. This is Elongation factor 4 from Klebsiella pneumoniae (strain 342).